The primary structure comprises 187 residues: Transcriptional activator of sulfur metabolism MET28 (187 aa).

The 64-residue stretch at 105 to 168 (DKIKQERRRK…EFWKAKLNDI (64 aa)) folds into the bZIP domain. The basic motif stretch occupies residues 106–136 (KIKQERRRKNTEASQRFRIRKKQKNFENMNK). Residues 137–151 (LQNLNTQINKLRDRI) are leucine-zipper.

This sequence belongs to the bZIP family. Interacts with MET4 to form a heteromeric complex which also includes CBF1. Forms two alternate complexes associating MET28 with MET4 and either MET31 or MET32. Binds to DNA through the MET4-MET28-CBF1 complex.

It is found in the cytoplasm. It localises to the nucleus. In terms of biological role, acts as an accessory factor in the activation of sulfur amino acids metabolism genes. Possesses no intrinsic transcription activation abilities. Binds to the MET16 promoter as a complex with MET4 and CBF1. Enhances the DNA-binding activity of CBF1. This is Transcriptional activator of sulfur metabolism MET28 (MET28) from Saccharomyces cerevisiae (strain ATCC 204508 / S288c) (Baker's yeast).